Consider the following 302-residue polypeptide: Urease accessory protein UreD 1 (302 aa).

This sequence belongs to the UreD family. UreD, UreF and UreG form a complex that acts as a GTP-hydrolysis-dependent molecular chaperone, activating the urease apoprotein by helping to assemble the nickel containing metallocenter of UreC. The UreE protein probably delivers the nickel.

The protein localises to the cytoplasm. Functionally, required for maturation of urease via the functional incorporation of the urease nickel metallocenter. This chain is Urease accessory protein UreD 1, found in Psychrobacter cryohalolentis (strain ATCC BAA-1226 / DSM 17306 / VKM B-2378 / K5).